The chain runs to 1247 residues: MLRLVAACPESCVVCTKDVTLCHQLTYIVAAPMTTRVLIITDGYLSSIESTNLSLLFNLALLSLSRNGIEDVQEDALHGLTMLRTLLLEHNQISSSSLTDHTFSKLHSLQVLVLSNNALRTLRGSWFRNTSGLTRLQLDGNQITNLTDSSFGGTNLHSLRYLDLSNNFISYIGKDAFRPLPQLQEVDLSRNRLAHMPDVFTPLKQLILLSLDKNQWSCTCDLHPLARFLRNYIKSSAHTLRNAKDLNCQPSTAAVAAAQSVLRLSETNCDSKAPNFTLVLKDRSPLLPGPDVALLTVLGFAGAVGLTCLGLVVFNWKLHQGKANEHTSENLCCRTFDEPLCAHEARNYHTKGYCNCHLTQENEIKVMSTVGSRKEMPLLQENSHQATSASESATLDGSFRNLKKKDRGVGSTLFCQDGRLLHSECSEPPGNMRAFNEAGLLTTYNPRKVQKLWNLEPGEVQPQTLQHHIIRTEDISSDIFRRRYATPASALAGESLEKRLTNESWQPPIEKEDNGLHPHRQRHFITSSSSKPCEPEEHYVQKIVQKNRSKYDDPCGLLKQSKPRYFQPNNSLICKYVPCEQFEDYMKEKKPNRRQHSKPEKEQIQINSAIEKFLMSEDNIDLSGLSTKTKKAYSPKRVIFHDPDLVEINRSMMSPKISTPWKRQKNQSNQLTKLDVKKFSNTGERNKGEKWFTNSWVLKRKRTPQSDLKGKIKGQNLKLNLHPFRKVRVHPEKSLSSLPKQCKQVLLPPKKLSKTSETEAKINTVCSADFLQQSESSNYVRLTSKRLPLKHDSKQTPYYQRNTKRAPLLSANNLRVVNQSSIESSCYSAGHIPDGNTSKLPQPTPTDAEHRHSHSQFSTEQMEDATQLESKVLSYLATTWENTGSDVLPFQHSRRATDQGTTESTEHMGQNVSKTSELNQFSLSPRNQTQLLDAHKTDSYNKEYTLDQNEALQHREQNSSHAQLENKEKTLMTKPQISHQIVENCIMDKEENDVEKKLSKTETYDSSLIPQTQSKNNLSFMKTNSIPYQNRIELPKDISTSPVSSQAVWHLTNSSEKGIDSTNALPRNDGTEALEIKIVGKEEKNMLDESKTDSSMLTQISQMTLKGITKERQQTWENGTSEKYILHDASSAEETITAKDLSITSSHETQNRILCSEVDPEVNSNVHNFREVQNIQPDKDSAHKEGAMTVETHEALSFLPGLKDSFEAENEVFLVPSRINEAENSAPKPVLYPPSAEYATTSPLETE.

LRR repeat units follow at residues 34-55, 58-79, 82-102, 108-129, 132-153, 158-179, and 182-203; these read TTRVLIITDGYLSSIESTNLSL, NLALLSLSRNGIEDVQEDALHG, MLRTLLLEHNQISSSSLTDHT, SLQVLVLSNNALRTLRGSWFRN, GLTRLQLDGNQITNLTDSSFGG, SLRYLDLSNNFISYIGKDAFRP, and QLQEVDLSRNRLAHMPDVFTPL. One can recognise an LRRCT domain in the interval 214–271; the sequence is NQWSCTCDLHPLARFLRNYIKSSAHTLRNAKDLNCQPSTAAVAAAQSVLRLSETNCDS. A helical membrane pass occupies residues 294-314; it reads LLTVLGFAGAVGLTCLGLVVF. Disordered stretches follow at residues 828 to 866, 887 to 927, and 1223 to 1247; these read SAGHIPDGNTSKLPQPTPTDAEHRHSHSQFSTEQMEDAT, VLPF…SPRN, and ENSAPKPVLYPPSAEYATTSPLETE. Composition is skewed to polar residues over residues 898-927 and 1238-1247; these read DQGTTESTEHMGQNVSKTSELNQFSLSPRN and YATTSPLETE.

It is found in the membrane. The protein is Leucine-rich repeat-containing protein 53 (LRRC53) of Homo sapiens (Human).